The following is a 250-amino-acid chain: 3-deoxy-manno-octulosonate cytidylyltransferase (250 aa).

Belongs to the KdsB family.

It localises to the cytoplasm. It carries out the reaction 3-deoxy-alpha-D-manno-oct-2-ulosonate + CTP = CMP-3-deoxy-beta-D-manno-octulosonate + diphosphate. Its pathway is nucleotide-sugar biosynthesis; CMP-3-deoxy-D-manno-octulosonate biosynthesis; CMP-3-deoxy-D-manno-octulosonate from 3-deoxy-D-manno-octulosonate and CTP: step 1/1. The protein operates within bacterial outer membrane biogenesis; lipopolysaccharide biosynthesis. Its function is as follows. Activates KDO (a required 8-carbon sugar) for incorporation into bacterial lipopolysaccharide in Gram-negative bacteria. The polypeptide is 3-deoxy-manno-octulosonate cytidylyltransferase (Thioalkalivibrio sulfidiphilus (strain HL-EbGR7)).